We begin with the raw amino-acid sequence, 219 residues long: 2-hydroxy-3-keto-5-methylthiopentenyl-1-phosphate phosphatase (219 aa).

This sequence belongs to the HAD-like hydrolase superfamily. MtnX family.

The enzyme catalyses 2-hydroxy-5-methylsulfanyl-3-oxopent-1-enyl phosphate + H2O = 1,2-dihydroxy-5-(methylsulfanyl)pent-1-en-3-one + phosphate. The protein operates within amino-acid biosynthesis; L-methionine biosynthesis via salvage pathway; L-methionine from S-methyl-5-thio-alpha-D-ribose 1-phosphate: step 4/6. Dephosphorylates 2-hydroxy-3-keto-5-methylthiopentenyl-1-phosphate (HK-MTPenyl-1-P) yielding 1,2-dihydroxy-3-keto-5-methylthiopentene (DHK-MTPene). The protein is 2-hydroxy-3-keto-5-methylthiopentenyl-1-phosphate phosphatase of Bacillus thuringiensis (strain Al Hakam).